The chain runs to 498 residues: Putative ABC transporter ATP-binding protein MM_2387 (498 aa).

ABC transporter domains lie at Ile-2–Ser-242 and Ile-258–Lys-490. ATP is bound by residues Gly-36–Thr-43 and Gly-290–Thr-297.

It belongs to the ABC transporter superfamily.

Its subcellular location is the cell membrane. In terms of biological role, probably part of an ABC transporter complex. Responsible for energy coupling to the transport system. The sequence is that of Putative ABC transporter ATP-binding protein MM_2387 from Methanosarcina mazei (strain ATCC BAA-159 / DSM 3647 / Goe1 / Go1 / JCM 11833 / OCM 88) (Methanosarcina frisia).